The primary structure comprises 440 residues: Proline--tRNA ligase (440 aa).

It belongs to the class-II aminoacyl-tRNA synthetase family. ProS type 2 subfamily. In terms of assembly, homodimer.

The protein localises to the cytoplasm. It catalyses the reaction tRNA(Pro) + L-proline + ATP = L-prolyl-tRNA(Pro) + AMP + diphosphate. Functionally, catalyzes the attachment of proline to tRNA(Pro) in a two-step reaction: proline is first activated by ATP to form Pro-AMP and then transferred to the acceptor end of tRNA(Pro). The protein is Proline--tRNA ligase of Rhizobium etli (strain ATCC 51251 / DSM 11541 / JCM 21823 / NBRC 15573 / CFN 42).